We begin with the raw amino-acid sequence, 225 residues long: Transmembrane protein C16orf54 homolog (225 aa).

Residues 34–54 (IPIMLGLASLTAFFIITTAVL) form a helical membrane-spanning segment. Residues 107–149 (RAPDPPTPGGTLEGRATAPPAIPTPHPSPSSLVPQTPPEVPAQ) are disordered. A phosphothreonine mark is found at Thr113 and Thr117. Residue Ser195 is modified to Phosphoserine.

Its subcellular location is the membrane. The chain is Transmembrane protein C16orf54 homolog from Rattus norvegicus (Rat).